A 716-amino-acid chain; its full sequence is ATP-dependent DNA helicase DinG (716 aa).

A Helicase ATP-binding domain is found at 17–294 (ALQEQIPDFI…TCMEQFRPKT (278 aa)). 54-61 (APTGVGKT) lines the ATP pocket. C120 serves as a coordination point for [4Fe-4S] cluster. The DEAH box signature appears at 131 to 134 (EPTQ). The [4Fe-4S] cluster site is built by C194, C199, and C205. The short motif at 248–251 (DEGH) is the DEAH box element. Residues 517–698 (HIAEMAAFFR…VFPIEQPEVP (182 aa)) enclose the Helicase C-terminal domain.

This sequence belongs to the helicase family. DinG subfamily. Type 1 sub-subfamily. Requires [4Fe-4S] cluster as cofactor.

It catalyses the reaction Couples ATP hydrolysis with the unwinding of duplex DNA at the replication fork by translocating in the 5'-3' direction. This creates two antiparallel DNA single strands (ssDNA). The leading ssDNA polymer is the template for DNA polymerase III holoenzyme which synthesizes a continuous strand.. It carries out the reaction ATP + H2O = ADP + phosphate + H(+). DNA-dependent ATPase and 5'-3' DNA helicase. Unwinds D-loops, R-loops, forked DNA and G-quadruplex DNA. The chain is ATP-dependent DNA helicase DinG from Escherichia coli O6:H1 (strain CFT073 / ATCC 700928 / UPEC).